Consider the following 1378-residue polypeptide: DNA-directed RNA polymerase subunit beta (1378 aa).

It belongs to the RNA polymerase beta chain family. The RNAP catalytic core consists of 2 alpha, 1 beta, 1 beta' and 1 omega subunit. When a sigma factor is associated with the core the holoenzyme is formed, which can initiate transcription.

The catalysed reaction is RNA(n) + a ribonucleoside 5'-triphosphate = RNA(n+1) + diphosphate. Its function is as follows. DNA-dependent RNA polymerase catalyzes the transcription of DNA into RNA using the four ribonucleoside triphosphates as substrates. This chain is DNA-directed RNA polymerase subunit beta, found in Mesorhizobium japonicum (strain LMG 29417 / CECT 9101 / MAFF 303099) (Mesorhizobium loti (strain MAFF 303099)).